We begin with the raw amino-acid sequence, 356 residues long: Phosphate acyltransferase (356 aa).

The protein belongs to the PlsX family. Homodimer. Probably interacts with PlsY.

It localises to the cytoplasm. The enzyme catalyses a fatty acyl-[ACP] + phosphate = an acyl phosphate + holo-[ACP]. Its pathway is lipid metabolism; phospholipid metabolism. In terms of biological role, catalyzes the reversible formation of acyl-phosphate (acyl-PO(4)) from acyl-[acyl-carrier-protein] (acyl-ACP). This enzyme utilizes acyl-ACP as fatty acyl donor, but not acyl-CoA. In Shigella flexneri serotype 5b (strain 8401), this protein is Phosphate acyltransferase.